The primary structure comprises 231 residues: Trypsin (231 aa).

Residues 1 to 8 (FPTDDDDK) constitute a propeptide, activation peptide. The Peptidase S1 domain maps to 9 to 229 (IVGGYTCAAN…YVNWIQQTIA (221 aa)). Cystine bridges form between cysteine 15/cysteine 145, cysteine 33/cysteine 49, cysteine 117/cysteine 218, cysteine 124/cysteine 191, cysteine 156/cysteine 170, and cysteine 181/cysteine 205. The active-site Charge relay system is histidine 48. The Ca(2+) site is built by glutamate 60, asparagine 62, valine 65, and glutamate 70. The Charge relay system role is filled by aspartate 92. Serine 185 acts as the Charge relay system in catalysis.

This sequence belongs to the peptidase S1 family. Requires Ca(2+) as cofactor.

Its subcellular location is the secreted. It localises to the extracellular space. It catalyses the reaction Preferential cleavage: Arg-|-Xaa, Lys-|-Xaa.. The protein is Trypsin of Sus scrofa (Pig).